The primary structure comprises 43 residues: Protein PsbN (43 aa).

A helical transmembrane segment spans residues 5–27 (TFITIFISCLLVSVTGYALYTAF).

This sequence belongs to the PsbN family.

The protein resides in the plastid. It is found in the chloroplast thylakoid membrane. May play a role in photosystem I and II biogenesis. The chain is Protein PsbN from Chara vulgaris (Common stonewort).